A 123-amino-acid polypeptide reads, in one-letter code: Small ribosomal subunit protein uS12 (123 aa).

Residues 1–21 (MPTIEQLVRKGRQAKPKKSKT) form a disordered region. Basic residues predominate over residues 9-20 (RKGRQAKPKKSK). D89 carries the post-translational modification 3-methylthioaspartic acid.

It belongs to the universal ribosomal protein uS12 family. Part of the 30S ribosomal subunit. Contacts proteins S8 and S17. May interact with IF1 in the 30S initiation complex.

In terms of biological role, with S4 and S5 plays an important role in translational accuracy. Interacts with and stabilizes bases of the 16S rRNA that are involved in tRNA selection in the A site and with the mRNA backbone. Located at the interface of the 30S and 50S subunits, it traverses the body of the 30S subunit contacting proteins on the other side and probably holding the rRNA structure together. The combined cluster of proteins S8, S12 and S17 appears to hold together the shoulder and platform of the 30S subunit. This chain is Small ribosomal subunit protein uS12, found in Bifidobacterium adolescentis (strain ATCC 15703 / DSM 20083 / NCTC 11814 / E194a).